Consider the following 262-residue polypeptide: Acyl-[acyl-carrier-protein]--UDP-N-acetylglucosamine O-acyltransferase (262 aa).

Belongs to the transferase hexapeptide repeat family. LpxA subfamily. Homotrimer.

The protein localises to the cytoplasm. It carries out the reaction a (3R)-hydroxyacyl-[ACP] + UDP-N-acetyl-alpha-D-glucosamine = a UDP-3-O-[(3R)-3-hydroxyacyl]-N-acetyl-alpha-D-glucosamine + holo-[ACP]. It participates in glycolipid biosynthesis; lipid IV(A) biosynthesis; lipid IV(A) from (3R)-3-hydroxytetradecanoyl-[acyl-carrier-protein] and UDP-N-acetyl-alpha-D-glucosamine: step 1/6. Involved in the biosynthesis of lipid A, a phosphorylated glycolipid that anchors the lipopolysaccharide to the outer membrane of the cell. This is Acyl-[acyl-carrier-protein]--UDP-N-acetylglucosamine O-acyltransferase from Paraburkholderia xenovorans (strain LB400).